The chain runs to 341 residues: Fructose-1,6-bisphosphatase, cytosolic (341 aa).

The Mg(2+) site is built by glutamate 100, aspartate 121, leucine 123, and aspartate 124. Substrate is bound by residues 124–127, asparagine 215, tyrosine 247, tyrosine 267, and lysine 277; that span reads DGSS. Glutamate 283 serves as a coordination point for Mg(2+).

It belongs to the FBPase class 1 family. Mg(2+) is required as a cofactor.

Its subcellular location is the cytoplasm. It catalyses the reaction beta-D-fructose 1,6-bisphosphate + H2O = beta-D-fructose 6-phosphate + phosphate. The chain is Fructose-1,6-bisphosphatase, cytosolic (FBPban1) from Musa acuminata (Banana).